A 470-amino-acid polypeptide reads, in one-letter code: Argininosuccinate lyase (470 aa).

It belongs to the lyase 1 family. Argininosuccinate lyase subfamily.

The protein resides in the cytoplasm. The enzyme catalyses 2-(N(omega)-L-arginino)succinate = fumarate + L-arginine. It functions in the pathway amino-acid biosynthesis; L-arginine biosynthesis; L-arginine from L-ornithine and carbamoyl phosphate: step 3/3. The protein is Argininosuccinate lyase of Mycobacterium leprae (strain Br4923).